The chain runs to 92 residues: Probable Fe(2+)-trafficking protein (92 aa).

This sequence belongs to the Fe(2+)-trafficking protein family.

Its function is as follows. Could be a mediator in iron transactions between iron acquisition and iron-requiring processes, such as synthesis and/or repair of Fe-S clusters in biosynthetic enzymes. The sequence is that of Probable Fe(2+)-trafficking protein from Shewanella sp. (strain W3-18-1).